We begin with the raw amino-acid sequence, 61 residues long: Small ribosomal subunit protein uS14 (61 aa).

Cys-24, Cys-27, Cys-40, and Cys-43 together coordinate Zn(2+).

This sequence belongs to the universal ribosomal protein uS14 family. Zinc-binding uS14 subfamily. Part of the 30S ribosomal subunit. Contacts proteins S3 and S10. It depends on Zn(2+) as a cofactor.

Functionally, binds 16S rRNA, required for the assembly of 30S particles and may also be responsible for determining the conformation of the 16S rRNA at the A site. This chain is Small ribosomal subunit protein uS14, found in Campylobacter concisus (strain 13826).